Consider the following 115-residue polypeptide: NADH-ubiquinone oxidoreductase chain 3 (115 aa).

Transmembrane regions (helical) follow at residues 4-24 (LMIL…AFWL), 55-75 (FFLV…LLPL), and 84-104 (INMM…GLAY).

It belongs to the complex I subunit 3 family. As to quaternary structure, core subunit of respiratory chain NADH dehydrogenase (Complex I) which is composed of 45 different subunits. Interacts with TMEM186. Interacts with TMEM242.

Its subcellular location is the mitochondrion inner membrane. It catalyses the reaction a ubiquinone + NADH + 5 H(+)(in) = a ubiquinol + NAD(+) + 4 H(+)(out). In terms of biological role, core subunit of the mitochondrial membrane respiratory chain NADH dehydrogenase (Complex I) which catalyzes electron transfer from NADH through the respiratory chain, using ubiquinone as an electron acceptor. Essential for the catalytic activity of complex I. This chain is NADH-ubiquinone oxidoreductase chain 3, found in Podomys floridanus (Florida mouse).